Consider the following 373-residue polypeptide: Glutamate 5-kinase (373 aa).

Lysine 15 lines the ATP pocket. 3 residues coordinate substrate: serine 56, aspartate 143, and asparagine 155. 175-176 serves as a coordination point for ATP; the sequence is SD. The PUA domain maps to 281-358; sequence KGTLTIDAGA…PDVMTILGIS (78 aa).

It belongs to the glutamate 5-kinase family.

Its subcellular location is the cytoplasm. The enzyme catalyses L-glutamate + ATP = L-glutamyl 5-phosphate + ADP. It functions in the pathway amino-acid biosynthesis; L-proline biosynthesis; L-glutamate 5-semialdehyde from L-glutamate: step 1/2. Catalyzes the transfer of a phosphate group to glutamate to form L-glutamate 5-phosphate. This chain is Glutamate 5-kinase, found in Bradyrhizobium diazoefficiens (strain JCM 10833 / BCRC 13528 / IAM 13628 / NBRC 14792 / USDA 110).